Consider the following 210-residue polypeptide: Proteasome subunit beta (210 aa).

The propeptide at 1–9 (MIHDKVFKG) is removed in mature form; by autocatalysis. Thr-10 serves as the catalytic Nucleophile.

It belongs to the peptidase T1B family. In terms of assembly, the 20S proteasome core is composed of 14 alpha and 14 beta subunits that assemble into four stacked heptameric rings, resulting in a barrel-shaped structure. The two inner rings, each composed of seven catalytic beta subunits, are sandwiched by two outer rings, each composed of seven alpha subunits. The catalytic chamber with the active sites is on the inside of the barrel. Has a gated structure, the ends of the cylinder being occluded by the N-termini of the alpha-subunits. Is capped at one or both ends by the proteasome regulatory ATPase, PAN.

Its subcellular location is the cytoplasm. The enzyme catalyses Cleavage of peptide bonds with very broad specificity.. Its activity is regulated as follows. The formation of the proteasomal ATPase PAN-20S proteasome complex, via the docking of the C-termini of PAN into the intersubunit pockets in the alpha-rings, triggers opening of the gate for substrate entry. Interconversion between the open-gate and close-gate conformations leads to a dynamic regulation of the 20S proteasome proteolysis activity. Component of the proteasome core, a large protease complex with broad specificity involved in protein degradation. This Ferroglobus placidus (strain DSM 10642 / AEDII12DO) protein is Proteasome subunit beta.